We begin with the raw amino-acid sequence, 331 residues long: Ketol-acid reductoisomerase (NADP(+)) (331 aa).

Positions 2-182 (ARMYYDEDGN…GGTRAGILET (181 aa)) constitute a KARI N-terminal Rossmann domain. Residues 25-28 (YGSQ), Ser-51, Ser-53, and 83-86 (DEVQ) contribute to the NADP(+) site. His-108 is an active-site residue. Gly-134 provides a ligand contact to NADP(+). Positions 183 to 328 (SFREETETDL…KDLRAMFSWL (146 aa)) constitute a KARI C-terminal knotted domain. Mg(2+) is bound by residues Asp-191, Glu-195, Glu-227, and Glu-231. Ser-252 contributes to the substrate binding site.

The protein belongs to the ketol-acid reductoisomerase family. It depends on Mg(2+) as a cofactor.

It catalyses the reaction (2R)-2,3-dihydroxy-3-methylbutanoate + NADP(+) = (2S)-2-acetolactate + NADPH + H(+). The enzyme catalyses (2R,3R)-2,3-dihydroxy-3-methylpentanoate + NADP(+) = (S)-2-ethyl-2-hydroxy-3-oxobutanoate + NADPH + H(+). Its pathway is amino-acid biosynthesis; L-isoleucine biosynthesis; L-isoleucine from 2-oxobutanoate: step 2/4. The protein operates within amino-acid biosynthesis; L-valine biosynthesis; L-valine from pyruvate: step 2/4. In terms of biological role, involved in the biosynthesis of branched-chain amino acids (BCAA). Catalyzes an alkyl-migration followed by a ketol-acid reduction of (S)-2-acetolactate (S2AL) to yield (R)-2,3-dihydroxy-isovalerate. In the isomerase reaction, S2AL is rearranged via a Mg-dependent methyl migration to produce 3-hydroxy-3-methyl-2-ketobutyrate (HMKB). In the reductase reaction, this 2-ketoacid undergoes a metal-dependent reduction by NADPH to yield (R)-2,3-dihydroxy-isovalerate. This chain is Ketol-acid reductoisomerase (NADP(+)), found in Gloeothece citriformis (strain PCC 7424) (Cyanothece sp. (strain PCC 7424)).